An 89-amino-acid chain; its full sequence is Small ribosomal subunit protein uS15 (89 aa).

Positions 1 to 21 (MALSKEQKTETLKEFGLHETD) are enriched in basic and acidic residues. Residues 1-22 (MALSKEQKTETLKEFGLHETDT) form a disordered region.

It belongs to the universal ribosomal protein uS15 family. Part of the 30S ribosomal subunit. Forms a bridge to the 50S subunit in the 70S ribosome, contacting the 23S rRNA.

One of the primary rRNA binding proteins, it binds directly to 16S rRNA where it helps nucleate assembly of the platform of the 30S subunit by binding and bridging several RNA helices of the 16S rRNA. Functionally, forms an intersubunit bridge (bridge B4) with the 23S rRNA of the 50S subunit in the ribosome. This is Small ribosomal subunit protein uS15 from Corynebacterium jeikeium (strain K411).